We begin with the raw amino-acid sequence, 87 residues long: Small ribosomal subunit protein bS20 (87 aa).

The protein belongs to the bacterial ribosomal protein bS20 family.

Its function is as follows. Binds directly to 16S ribosomal RNA. This is Small ribosomal subunit protein bS20 from Corynebacterium jeikeium (strain K411).